We begin with the raw amino-acid sequence, 331 residues long: Malate dehydrogenase (331 aa).

Residue 14–20 coordinates NAD(+); the sequence is GAAGSIG. The substrate site is built by arginine 95 and arginine 101. NAD(+) contacts are provided by residues asparagine 108, glutamine 115, and 132–134; that span reads VGN. Residues asparagine 134 and arginine 165 each coordinate substrate. The active-site Proton acceptor is the histidine 190.

The protein belongs to the LDH/MDH superfamily. MDH type 2 family.

The enzyme catalyses (S)-malate + NAD(+) = oxaloacetate + NADH + H(+). Its function is as follows. Catalyzes the reversible oxidation of malate to oxaloacetate. In Rhodococcus jostii (strain RHA1), this protein is Malate dehydrogenase.